A 116-amino-acid chain; its full sequence is Large ribosomal subunit protein bL17 (116 aa).

Belongs to the bacterial ribosomal protein bL17 family. As to quaternary structure, part of the 50S ribosomal subunit. Contacts protein L32.

This chain is Large ribosomal subunit protein bL17, found in Rippkaea orientalis (strain PCC 8801 / RF-1) (Cyanothece sp. (strain PCC 8801)).